The sequence spans 393 residues: Thermostable carboxypeptidase 1 (393 aa).

Zn(2+)-binding residues include histidine 104, aspartate 109, and histidine 245. Tyrosine 302 serves as the catalytic Proton donor. The active-site Nucleophile is the glutamate 373.

The protein belongs to the peptidase M20 family. In terms of assembly, homotetramer. It depends on Zn(2+) as a cofactor.

Its function is as follows. Can release basic, acidic, aromatic, and, to a lesser extent, aliphatic amino acids. This is Thermostable carboxypeptidase 1 (cpsA1) from Saccharolobus solfataricus (strain ATCC 35092 / DSM 1617 / JCM 11322 / P2) (Sulfolobus solfataricus).